A 412-amino-acid chain; its full sequence is Lysosomal phospholipase A and acyltransferase (412 aa).

Positions 1-33 (MGLHLRPYRVGLLPDGLLFLLLLLMLLADPALP) are cleaved as a signal peptide. Aspartate 46 lines the substrate pocket. Cysteine 65 and cysteine 89 are joined by a disulfide. A glycan (N-linked (GlcNAc...) asparagine) is linked at asparagine 99. Serine 198 acts as the Acyl-ester intermediate in catalysis. Serine 198 is a Zn(2+) binding site. Residue methionine 199 participates in substrate binding. N-linked (GlcNAc...) asparagine glycans are attached at residues asparagine 273 and asparagine 289. Residues aspartate 340 and cysteine 355 each contribute to the Zn(2+) site. Residues aspartate 360 and histidine 392 each act as charge relay system in the active site. Residue histidine 392 participates in Zn(2+) binding. N-linked (GlcNAc...) asparagine glycosylation occurs at asparagine 398.

It belongs to the AB hydrolase superfamily. Lipase family. N-glycosylated. N-glycosylation is important for maturation of the enzyme and normal subcellular location. As to expression, detected in blood plasma (at protein level). Ubiquitous. Highly expressed in heart, placenta, skeletal muscle, kidney and pancreas. Detected at lower levels in spleen, thymus, prostate, testis, ovary, small intestine, colon and peripheral blood leukocytes.

It localises to the lysosome. The protein localises to the secreted. The protein resides in the membrane. It carries out the reaction a 1,2-diacyl-sn-glycero-3-phosphocholine + H2O = a 2-acyl-sn-glycero-3-phosphocholine + a fatty acid + H(+). It catalyses the reaction 1-hexadecanoyl-2-(9Z-octadecenoyl)-sn-glycero-3-phosphocholine + H2O = 2-(9Z-octadecenoyl)-sn-glycero-3-phosphocholine + hexadecanoate + H(+). The enzyme catalyses 1-hexadecanoyl-2-glutaroyl-sn-glycero-3-phosphocholine + H2O = 2-glutaroyl-sn-glycero-3-phosphocholine + hexadecanoate + H(+). The catalysed reaction is 1-hexadecanoyl-2-nonadioyl-sn-glycero-3-phosphocholine + H2O = 2-nonadioyl-sn-glycero-3-phosphocholine + hexadecanoate + H(+). It carries out the reaction 1-hexadecanoyl-2-(5-oxopentanoyl)-sn-glycero-3-phosphocholine + H2O = 2-(5-oxopentanoyl)-sn-glycero-3-phosphocholine + hexadecanoate + H(+). It catalyses the reaction 1-hexadecanoyl-2-(9-oxononanoyl)-sn-glycero-3-phosphocholine + H2O = 2-(9-oxononanoyl)-sn-glycero-3-phosphocholine + hexadecanoate + H(+). The enzyme catalyses 1,2-dihexadecanoyl-sn-glycero-3-phosphocholine + H2O = 2-hexadecanoyl-sn-glycero-3-phosphocholine + hexadecanoate + H(+). The catalysed reaction is a 1,2-diacyl-sn-glycero-3-phosphocholine + H2O = a 1-acyl-sn-glycero-3-phosphocholine + a fatty acid + H(+). It carries out the reaction 1,2-di-(9Z-octadecenoyl)-sn-glycero-3-phosphocholine + H2O = 1-(9Z-octadecenoyl)-sn-glycero-3-phosphocholine + (9Z)-octadecenoate + H(+). It catalyses the reaction 1-hexadecanoyl-2-(9Z-octadecenoyl)-sn-glycero-3-phosphocholine + H2O = 1-hexadecanoyl-sn-glycero-3-phosphocholine + (9Z)-octadecenoate + H(+). The enzyme catalyses 1,2-dihexadecanoyl-sn-glycero-3-phosphocholine + H2O = 1-hexadecanoyl-sn-glycero-3-phosphocholine + hexadecanoate + H(+). The catalysed reaction is a 1-acyl-sn-glycero-3-phosphocholine + H2O = sn-glycerol 3-phosphocholine + a fatty acid + H(+). It carries out the reaction 1-hexadecanoyl-sn-glycero-3-phosphocholine + H2O = sn-glycerol 3-phosphocholine + hexadecanoate + H(+). It catalyses the reaction N-(acetyl)-sphing-4-enine + a 1,2-diacyl-sn-glycero-3-phosphoethanolamine = 1-O-acyl-N-(acetyl)-sphing-4-enine + a 2-acyl-sn-glycero-3-phosphoethanolamine. The enzyme catalyses 1-hexadecanoyl-2-(9Z-octadecenoyl)-sn-glycero-3-phosphoethanolamine + N-(acetyl)-sphing-4-enine = 2-(9Z-octadecenoyl)-sn-glycero-3-phosphoethanolamine + 1-hexadecanoyl-N-(acetyl)-sphing-4-enine. The catalysed reaction is 1-hexadecanoyl-2-(9Z,12Z-octadecadienoyl)-sn-glycero-3-phosphoethanolamine + N-(acetyl)-sphing-4-enine = 2-(9Z,12Z)-octadecadienoyl-sn-glycero-3-phosphoethanolamine + 1-hexadecanoyl-N-(acetyl)-sphing-4-enine. It carries out the reaction 1-hexadecanoyl-2-(5Z,8Z,11Z,14Z-eicosatetraenoyl)-sn-glycero-3-phosphoethanolamine + N-(acetyl)-sphing-4-enine = 2-(5Z,8Z,11Z,14Z)-eicosatetraenoyl-sn-glycero-3-phosphoethanolamine + 1-hexadecanoyl-N-(acetyl)-sphing-4-enine. It catalyses the reaction N-(acetyl)-sphing-4-enine + a 1,2-diacyl-sn-glycero-3-phosphoethanolamine = 1-O-acyl-N-(acetyl)-sphing-4-enine + a 1-acyl-sn-glycero-3-phosphoethanolamine. The enzyme catalyses 1-hexadecanoyl-2-(9Z-octadecenoyl)-sn-glycero-3-phosphoethanolamine + N-(acetyl)-sphing-4-enine = 1-(9Z-octadecenoyl)-N-(acetyl)-sphing-4-enine + 1-hexadecanoyl-sn-glycero-3-phosphoethanolamine. The catalysed reaction is 1-hexadecanoyl-2-(9Z,12Z-octadecadienoyl)-sn-glycero-3-phosphoethanolamine + N-(acetyl)-sphing-4-enine = 1-(9Z,12Z-octadecadienoyl)-N-acetylsphing-4-enine + 1-hexadecanoyl-sn-glycero-3-phosphoethanolamine. It carries out the reaction 1-hexadecanoyl-2-(5Z,8Z,11Z,14Z-eicosatetraenoyl)-sn-glycero-3-phosphoethanolamine + N-(acetyl)-sphing-4-enine = 1-(5Z,8Z,11Z,14Z)-eicosatetraenoyl-N-(acetyl)-sphing-4-enine + 1-hexadecanoyl-sn-glycero-3-phosphoethanolamine. It catalyses the reaction N-(acetyl)-sphing-4-enine + a 1,2-diacyl-sn-glycero-3-phosphocholine = 1-O-acyl-N-(acetyl)-sphing-4-enine + a 1-acyl-sn-glycero-3-phosphocholine. The enzyme catalyses 1-hexadecanoyl-2-(9Z-octadecenoyl)-sn-glycero-3-phosphocholine + N-(acetyl)-sphing-4-enine = 1-(9Z-octadecenoyl)-N-(acetyl)-sphing-4-enine + 1-hexadecanoyl-sn-glycero-3-phosphocholine. The catalysed reaction is 1-hexadecanoyl-2-(9Z,12Z-octadecadienoyl)-sn-glycero-3-phosphocholine + N-(acetyl)-sphing-4-enine = 1-(9Z,12Z-octadecadienoyl)-N-acetylsphing-4-enine + 1-hexadecanoyl-sn-glycero-3-phosphocholine. It carries out the reaction 1-hexadecanoyl-2-(5Z,8Z,11Z,14Z-eicosatetraenoyl)-sn-glycero-3-phosphocholine + N-(acetyl)-sphing-4-enine = 1-(5Z,8Z,11Z,14Z)-eicosatetraenoyl-N-(acetyl)-sphing-4-enine + 1-hexadecanoyl-sn-glycero-3-phosphocholine. It catalyses the reaction 1-hexadecanoyl-2-(4Z,7Z,10Z,13Z,16Z,19Z-docosahexaenoyl)-sn-glycero-3-phosphocholine + N-(acetyl)-sphing-4-enine = 1-(4Z,7Z,10Z,13Z,16Z,19Z-docosahexaenoyl)-N-(acetyl)-sphing-4-enine + 1-hexadecanoyl-sn-glycero-3-phosphocholine. The enzyme catalyses 1-octadecanoyl-2-(9Z-octadecenoyl)-sn-glycero-3-phosphocholine + N-(acetyl)-sphing-4-enine = 1-(9Z-octadecenoyl)-N-(acetyl)-sphing-4-enine + 1-octadecanoyl-sn-glycero-3-phosphocholine. The catalysed reaction is 1-octadecanoyl-2-(9Z,12Z)-octadecadienoyl-sn-glycero-3-phosphocholine + N-(acetyl)-sphing-4-enine = 1-(9Z,12Z-octadecadienoyl)-N-acetylsphing-4-enine + 1-octadecanoyl-sn-glycero-3-phosphocholine. It carries out the reaction 1-octadecanoyl-2-(5Z,8Z,11Z,14Z-eicosatetraenoyl)-sn-glycero-3-phosphocholine + N-(acetyl)-sphing-4-enine = 1-(5Z,8Z,11Z,14Z)-eicosatetraenoyl-N-(acetyl)-sphing-4-enine + 1-octadecanoyl-sn-glycero-3-phosphocholine. It catalyses the reaction 1-(9Z-octadecenoyl)-2-hexadecanoyl-sn-glycero-3-phosphocholine + N-(acetyl)-sphing-4-enine = 1-hexadecanoyl-N-(acetyl)-sphing-4-enine + 1-(9Z-octadecenoyl)-sn-glycero-3-phosphocholine. The enzyme catalyses 1-(9Z)-octadecenoyl-2-octadecanoyl-sn-glycero-3-phosphocholine + N-(acetyl)-sphing-4-enine = 1-octadecanoyl-N-(acetyl)-sphing-4-enine + 1-(9Z-octadecenoyl)-sn-glycero-3-phosphocholine. The catalysed reaction is 1,2-di-(9Z-octadecenoyl)-sn-glycero-3-phosphocholine + N-(acetyl)-sphing-4-enine = 1-(9Z-octadecenoyl)-N-(acetyl)-sphing-4-enine + 1-(9Z-octadecenoyl)-sn-glycero-3-phosphocholine. It carries out the reaction N-(acetyl)-sphing-4-enine + a 1,2-diacyl-sn-glycero-3-phosphocholine = 1-O-acyl-N-(acetyl)-sphing-4-enine + a 2-acyl-sn-glycero-3-phosphocholine. It catalyses the reaction 1-hexadecanoyl-2-(9Z-octadecenoyl)-sn-glycero-3-phosphocholine + N-(acetyl)-sphing-4-enine = 1-hexadecanoyl-N-(acetyl)-sphing-4-enine + 2-(9Z-octadecenoyl)-sn-glycero-3-phosphocholine. The enzyme catalyses 1-hexadecanoyl-2-(9Z,12Z-octadecadienoyl)-sn-glycero-3-phosphocholine + N-(acetyl)-sphing-4-enine = 2-(9Z,12Z-octadecadienoyl)-sn-glycero-3-phosphocholine + 1-hexadecanoyl-N-(acetyl)-sphing-4-enine. The catalysed reaction is 1-hexadecanoyl-2-(5Z,8Z,11Z,14Z-eicosatetraenoyl)-sn-glycero-3-phosphocholine + N-(acetyl)-sphing-4-enine = 1-hexadecanoyl-N-(acetyl)-sphing-4-enine + 2-(5Z,8Z,11Z,14Z)-eicosatetraenoyl-sn-glycero-3-phosphocholine. It carries out the reaction 1-hexadecanoyl-2-(4Z,7Z,10Z,13Z,16Z,19Z-docosahexaenoyl)-sn-glycero-3-phosphocholine + N-(acetyl)-sphing-4-enine = 2-(4Z,7Z,10Z,13Z,16Z,19Z-docosahexaenoyl)-sn-glycero-3-phosphocholine + 1-hexadecanoyl-N-(acetyl)-sphing-4-enine. It catalyses the reaction 1-hexadecanoyl-2-nonadioyl-sn-glycero-3-phosphocholine + N-(acetyl)-sphing-4-enine = 2-nonadioyl-sn-glycero-3-phosphocholine + 1-hexadecanoyl-N-(acetyl)-sphing-4-enine. The enzyme catalyses 1-octadecanoyl-2-(9Z-octadecenoyl)-sn-glycero-3-phosphocholine + N-(acetyl)-sphing-4-enine = 1-octadecanoyl-N-(acetyl)-sphing-4-enine + 2-(9Z-octadecenoyl)-sn-glycero-3-phosphocholine. The catalysed reaction is 1-octadecanoyl-2-(5Z,8Z,11Z,14Z-eicosatetraenoyl)-sn-glycero-3-phosphocholine + N-(acetyl)-sphing-4-enine = 1-octadecanoyl-N-(acetyl)-sphing-4-enine + 2-(5Z,8Z,11Z,14Z)-eicosatetraenoyl-sn-glycero-3-phosphocholine. It carries out the reaction 1-(9Z-octadecenoyl)-2-hexadecanoyl-sn-glycero-3-phosphocholine + N-(acetyl)-sphing-4-enine = 1-(9Z-octadecenoyl)-N-(acetyl)-sphing-4-enine + 2-hexadecanoyl-sn-glycero-3-phosphocholine. It catalyses the reaction 1-(9Z)-octadecenoyl-2-octadecanoyl-sn-glycero-3-phosphocholine + N-(acetyl)-sphing-4-enine = 2-octadecanoyl-sn-glycero-3-phosphocholine + 1-(9Z-octadecenoyl)-N-(acetyl)-sphing-4-enine. The enzyme catalyses a 1,2-diacyl-sn-glycero-3-phospho-L-serine + N-(acetyl)-sphing-4-enine = a 2-acyl-sn-glycero-3-phospho-L-serine + 1-O-acyl-N-(acetyl)-sphing-4-enine. The catalysed reaction is 1-octadecanoyl-2-(9Z-octadecenoyl)-sn-glycero-3-phospho-L-serine + N-(acetyl)-sphing-4-enine = 2-(9Z-octadecenoyl)-sn-glycero-3-phospho-L-serine + 1-octadecanoyl-N-(acetyl)-sphing-4-enine. It carries out the reaction a 1,2-diacyl-sn-glycero-3-phospho-L-serine + N-(acetyl)-sphing-4-enine = 1-O-acyl-N-(acetyl)-sphing-4-enine + a 1-acyl-sn-glycero-3-phospho-L-serine. It catalyses the reaction 1-octadecanoyl-2-(9Z-octadecenoyl)-sn-glycero-3-phospho-L-serine + N-(acetyl)-sphing-4-enine = 1-octadecanoyl-sn-glycero-3-phosphoserine + 1-(9Z-octadecenoyl)-N-(acetyl)-sphing-4-enine. The enzyme catalyses a 1,2-diacyl-sn-glycero-3-phospho-(1'-sn-glycerol) + N-(acetyl)-sphing-4-enine = 2-acyl-sn-glycero-3-phospho-(1'-sn-glycerol) + 1-O-acyl-N-(acetyl)-sphing-4-enine. The catalysed reaction is 1-octadecanoyl-2-(9Z-octadecenoyl)-sn-glycero-3-phospho-(1'-sn-glycerol) + N-(acetyl)-sphing-4-enine = 2-(9Z-octadecenoyl)-sn-glycero-3-phospho-(1'-sn-glycerol) + 1-octadecanoyl-N-(acetyl)-sphing-4-enine. It carries out the reaction a 1,2-diacyl-sn-glycero-3-phospho-(1'-sn-glycerol) + N-(acetyl)-sphing-4-enine = 1-O-acyl-N-(acetyl)-sphing-4-enine + 1-acyl-sn-glycero-3-phospho-(1'-sn-glycerol). It catalyses the reaction 1-octadecanoyl-2-(9Z-octadecenoyl)-sn-glycero-3-phospho-(1'-sn-glycerol) + N-(acetyl)-sphing-4-enine = 1-octadecanoyl-sn-glycero-3-phospho-(1'-sn-glycerol) + 1-(9Z-octadecenoyl)-N-(acetyl)-sphing-4-enine. The enzyme catalyses an N-acylethanolamine + a 1,2-diacyl-sn-glycero-3-phosphocholine = 2-(acylamino)ethyl fatty acid + a 2-acyl-sn-glycero-3-phosphocholine. The catalysed reaction is an N-acylethanolamine + a 1,2-diacyl-sn-glycero-3-phosphocholine = 2-(acylamino)ethyl fatty acid + a 1-acyl-sn-glycero-3-phosphocholine. It carries out the reaction N-(5Z,8Z,11Z,14Z-eicosatetraenoyl)-ethanolamine + 1,2-di-(9Z-octadecenoyl)-sn-glycero-3-phosphocholine = 2-[(5Z,8Z,11Z,14Z)-eicosatetraenoylamino]ethyl (9Z)-octadecenoate + (9Z-octadecenoyl)-sn-glycero-3-phosphocholine. It catalyses the reaction N-(9Z-octadecenoyl) ethanolamine + 1,2-di-(9Z-octadecenoyl)-sn-glycero-3-phosphocholine = 2-[(9Z)-octadecenoylamino]ethyl (9Z)-octadecenoate + (9Z-octadecenoyl)-sn-glycero-3-phosphocholine. The enzyme catalyses a 3-acyl-sn-glycerol + a 1,2-diacyl-sn-glycero-3-phosphocholine = a 1,3-diacylglycerol + a 1-acyl-sn-glycero-3-phosphocholine. The catalysed reaction is a 3-acyl-sn-glycerol + a 1,2-diacyl-sn-glycero-3-phosphocholine = a 1,3-diacylglycerol + a 2-acyl-sn-glycero-3-phosphocholine. It carries out the reaction 3-(9Z-octadecenoyl)-sn-glycerol + 1,2-di-(9Z-octadecenoyl)-sn-glycero-3-phosphocholine = 1,3-di-(9Z-octadecenoyl)-glycerol + (9Z-octadecenoyl)-sn-glycero-3-phosphocholine. It catalyses the reaction 3-hexadecanoyl-sn-glycerol + 1,2-di-(9Z-octadecenoyl)-sn-glycero-3-phosphocholine = 1-(9Z)-octadecenoyl-3-hexadecanoyl-sn-glycerol + (9Z-octadecenoyl)-sn-glycero-3-phosphocholine. The enzyme catalyses a 1-acyl-sn-glycerol + a 1,2-diacyl-sn-glycero-3-phosphocholine = a 1,3-diacylglycerol + a 2-acyl-sn-glycero-3-phosphocholine. The catalysed reaction is a 1-acyl-sn-glycerol + a 1,2-diacyl-sn-glycero-3-phosphocholine = a 1,3-diacylglycerol + a 1-acyl-sn-glycero-3-phosphocholine. It carries out the reaction 1-(9Z-octadecenoyl)-sn-glycerol + 1,2-di-(9Z-octadecenoyl)-sn-glycero-3-phosphocholine = 1,3-di-(9Z-octadecenoyl)-glycerol + (9Z-octadecenoyl)-sn-glycero-3-phosphocholine. It catalyses the reaction 1-hexadecanoyl-sn-glycerol + 1,2-di-(9Z-octadecenoyl)-sn-glycero-3-phosphocholine = 1-hexadecanoyl-3-(9Z)-octadecenoyl-sn-glycerol + (9Z-octadecenoyl)-sn-glycero-3-phosphocholine. The enzyme catalyses a 2-acylglycerol + a 1,2-diacyl-sn-glycero-3-phosphocholine = a 1,2-diacylglycerol + a 2-acyl-sn-glycero-3-phosphocholine. The catalysed reaction is a 2-acylglycerol + a 1,2-diacyl-sn-glycero-3-phosphocholine = a 1,2-diacylglycerol + a 1-acyl-sn-glycero-3-phosphocholine. It carries out the reaction 2-hexadecanoylglycerol + 1,2-di-(9Z-octadecenoyl)-sn-glycero-3-phosphocholine = 1-(9Z)-octadecenoyl-2-hexadecanoylglycerol + (9Z-octadecenoyl)-sn-glycero-3-phosphocholine. It catalyses the reaction 1-O-alkylglycerol + a 1,2-diacyl-sn-glycero-3-phosphocholine = 1-O-alkyl-3-acylglycerol + a 1-acyl-sn-glycero-3-phosphocholine. The enzyme catalyses 1-O-alkylglycerol + a 1,2-diacyl-sn-glycero-3-phosphocholine = 1-O-alkyl-3-acylglycerol + a 2-acyl-sn-glycero-3-phosphocholine. The catalysed reaction is 1-O-hexadecylglycerol + 1,2-di-(9Z-octadecenoyl)-sn-glycero-3-phosphocholine = 1-O-hexadecyl-3-(9Z)-octadecenoylglycerol + (9Z-octadecenoyl)-sn-glycero-3-phosphocholine. It carries out the reaction 1-O-alkyl-2-acyl-sn-glycerol + a 1,2-diacyl-sn-glycero-3-phosphocholine = 1-O-alkyl-2,3-diacyl-sn-glycerol + a 2-acyl-sn-glycero-3-phosphocholine. It catalyses the reaction 1-O-alkyl-2-acyl-sn-glycerol + a 1,2-diacyl-sn-glycero-3-phosphocholine = 1-O-alkyl-2,3-diacyl-sn-glycerol + a 1-acyl-sn-glycero-3-phosphocholine. The enzyme catalyses 1-O-hexadecyl-2-acetyl-sn-glycerol + 1,2-di-(9Z-octadecenoyl)-sn-glycero-3-phosphocholine = 1-O-hexadecyl-2-acetyl-3-(9Z)-octadecenoyl-sn-glycerol + (9Z-octadecenoyl)-sn-glycero-3-phosphocholine. The catalysed reaction is 1-O-hexadecyl-2-O-methyl-sn-glycerol + 1,2-di-(9Z-octadecenoyl)-sn-glycero-3-phosphocholine = 1-O-hexadecyl-2-O-methyl-3-(9Z)-octadecenoyl-sn-glycerol + (9Z-octadecenoyl)-sn-glycero-3-phosphocholine. It carries out the reaction a 1,2-diacyl-sn-glycero-3-phosphoethanolamine + H2O = a 1-acyl-sn-glycero-3-phosphoethanolamine + a fatty acid + H(+). It catalyses the reaction 1-acyl-2-(5Z,8Z,11Z,14Z)-eicosatetraenoyl-sn-glycero-3-phosphoethanolamine + H2O = a 1-acyl-sn-glycero-3-phosphoethanolamine + (5Z,8Z,11Z,14Z)-eicosatetraenoate + H(+). The enzyme catalyses a 1,2-diacyl-sn-glycero-3-phospho-(1'-sn-glycerol) + H2O = 1-acyl-sn-glycero-3-phospho-(1'-sn-glycerol) + a fatty acid + H(+). The catalysed reaction is 1-hexadecanoyl-2-(9Z-octadecenoyl)-sn-glycero-3-phospho-(1'-sn-glycerol) + H2O = 1-hexadecanoyl-sn-glycero-3-phospho-(1'-sn-glycerol) + (9Z)-octadecenoate + H(+). It carries out the reaction a 1,2-diacyl-sn-glycero-3-phospho-(1'-sn-glycerol) + H2O = 2-acyl-sn-glycero-3-phospho-(1'-sn-glycerol) + a fatty acid + H(+). It catalyses the reaction 1-hexadecanoyl-2-(9Z-octadecenoyl)-sn-glycero-3-phospho-(1'-sn-glycerol) + H2O = 2-(9Z-octadecenoyl)-sn-glycero-3-phospho-(1'-sn-glycerol) + hexadecanoate + H(+). Inhibited by zinc ions at neutral pH. Zinc ions in plasma may keep the enzyme from hydrolyzing inappropriate substrates. Its function is as follows. Has dual calcium-independent phospholipase and O-acyltransferase activities with a potential role in glycerophospholipid homeostasis and remodeling of acyl groups of lipophilic alcohols present in acidic cellular compartments. Catalyzes hydrolysis of the ester bond of the fatty acyl group attached at sn-1 or sn-2 position of phospholipids (phospholipase A1 or A2 activity) and transfer it to the hydroxyl group at the first carbon of lipophilic alcohols (O-acyltransferase activity). Among preferred fatty acyl donors are phosphatidylcholines, phosphatidylethanolamines, phosphatidylglycerols and phosphatidylserines. Favors sn-2 over sn-1 deacylation of unsaturated fatty acyl groups of phosphatidylcholines, phosphatidylethanolamines, and phosphatidylglycerols. Among preferred fatty acyl acceptors are natural lipophilic alcohols including short-chain ceramide N-acetyl-sphingosine (C2 ceramide), alkylacylglycerols, monoacylglycerols, and acylethanolamides such as anandamide and oleoylethanolamide. Selectively hydrolyzes the sn-1 fatty acyl group of truncated oxidized phospholipids and may play a role in detoxification of reactive oxidized phospholipids during oxidative stress. Required for normal phospholipid degradation in alveolar macrophages with potential implications in the clearance of pulmonary surfactant, which is mainly composed of dipalmitoylphosphatidylcholine (1,2-dihexadecanoyl-sn-glycero-3-phosphocholine). Involved in the first step of bis(monoacylglycero)phosphate (BMP) de novo synthesis from phosphatidylglycerol (1,2-diacyl-sn-glycero-3-phospho-(1'-sn-glycerol), PG). BMP is an important player in cargo sorting and degradation, regulation of cellular cholesterol levels and intercellular communication. At neutral pH, hydrolyzes the sn-1 fatty acyl group of the lysophosphatidylcholines. The polypeptide is Lysosomal phospholipase A and acyltransferase (Homo sapiens (Human)).